A 294-amino-acid chain; its full sequence is Phosphatidylserine decarboxylase proenzyme (294 aa).

Residues D113, H169, and S256 each act as charge relay system; for autoendoproteolytic cleavage activity in the active site. S256 acts as the Schiff-base intermediate with substrate; via pyruvic acid; for decarboxylase activity in catalysis. S256 is modified (pyruvic acid (Ser); by autocatalysis).

It belongs to the phosphatidylserine decarboxylase family. PSD-B subfamily. Prokaryotic type II sub-subfamily. Heterodimer of a large membrane-associated beta subunit and a small pyruvoyl-containing alpha subunit. Pyruvate serves as cofactor. Is synthesized initially as an inactive proenzyme. Formation of the active enzyme involves a self-maturation process in which the active site pyruvoyl group is generated from an internal serine residue via an autocatalytic post-translational modification. Two non-identical subunits are generated from the proenzyme in this reaction, and the pyruvate is formed at the N-terminus of the alpha chain, which is derived from the carboxyl end of the proenzyme. The autoendoproteolytic cleavage occurs by a canonical serine protease mechanism, in which the side chain hydroxyl group of the serine supplies its oxygen atom to form the C-terminus of the beta chain, while the remainder of the serine residue undergoes an oxidative deamination to produce ammonia and the pyruvoyl prosthetic group on the alpha chain. During this reaction, the Ser that is part of the protease active site of the proenzyme becomes the pyruvoyl prosthetic group, which constitutes an essential element of the active site of the mature decarboxylase.

It is found in the cell membrane. It carries out the reaction a 1,2-diacyl-sn-glycero-3-phospho-L-serine + H(+) = a 1,2-diacyl-sn-glycero-3-phosphoethanolamine + CO2. It participates in phospholipid metabolism; phosphatidylethanolamine biosynthesis; phosphatidylethanolamine from CDP-diacylglycerol: step 2/2. Functionally, catalyzes the formation of phosphatidylethanolamine (PtdEtn) from phosphatidylserine (PtdSer). The polypeptide is Phosphatidylserine decarboxylase proenzyme (Clostridium perfringens (strain SM101 / Type A)).